The primary structure comprises 468 residues: 3-isopropylmalate dehydratase large subunit (468 aa).

Residues Cys-349, Cys-409, and Cys-412 each coordinate [4Fe-4S] cluster.

It belongs to the aconitase/IPM isomerase family. LeuC type 1 subfamily. Heterodimer of LeuC and LeuD. Requires [4Fe-4S] cluster as cofactor.

The catalysed reaction is (2R,3S)-3-isopropylmalate = (2S)-2-isopropylmalate. It functions in the pathway amino-acid biosynthesis; L-leucine biosynthesis; L-leucine from 3-methyl-2-oxobutanoate: step 2/4. Its function is as follows. Catalyzes the isomerization between 2-isopropylmalate and 3-isopropylmalate, via the formation of 2-isopropylmaleate. This Shewanella baltica (strain OS223) protein is 3-isopropylmalate dehydratase large subunit.